The following is a 132-amino-acid chain: MAAMKKAMKVKKSAKKSAKKSGKKGGMKKKAKRVSKVARGKRAKSSVFRGTKERTSGGLTKNSLVKNKQGRVVSKKQSEHGKKIFKKHGLQKWIDAVTKARKALGIKGFQAVGGSSAKGKILLAKSRSFYKK.

A compositionally biased stretch (basic residues) spans 1-44 (MAAMKKAMKVKKSAKKSAKKSGKKGGMKKKAKRVSKVARGKRAK). A disordered region spans residues 1–84 (MAAMKKAMKV…KKQSEHGKKI (84 aa)). Over residues 57–66 (GGLTKNSLVK) the composition is skewed to polar residues.

Post-translationally, phosphorylated.

The protein localises to the nucleus. It localises to the chromosome. Functionally, DNA-binding protein, which similarly to histones, may compact DNA into chromatin. In Hematodinium sp, this protein is Dinoflagellate viral nucleoprotein 5.